Here is a 528-residue protein sequence, read N- to C-terminus: MPQTHEMSLNGTQYLKYELKDLESRAHDAKTPSTNEFYDDVESHGTEELVEAKLSFLNRIAAGLSAETKGIEPITEDEKTDDSILNAASMWFSANMVLPAYAIGALGPMVFDLNFGQSVFVIIFFNLLGLVSVAFFSVFGAELGLRQMILSRYLVGNIAARIFSFINFIACIGWGIVNTVASSQVLNMVNPGHQCPLWAGCIVIIGATVIVTFFGYGVIHAYEKWAWVPNFAVFLVIIARLARSKKFVLGEWTSGPTTAGNVLSFGSTVYGFAAGWTTYAADYTVYMPRKTNKYKIFFSLVVGLATPLYFTMILGAAVAMAAIGDPAWKTYYDENSIGGLTFAVLVPNSVHGFGQFCCVLLSLSTIANNVPNMYTIALSVQATWEPLAKVPRVIWTLLGNAAALGIAIPACYYFSTFMNYFMDSIGYYLAIYIAIACSEHFIYRRSFSAYNVDDWDSWERLPIGIAGTAALIVGAFGVALGMCQTYWVGEISRLIGDYGGDIGFELGLSWAFIVYNIARPFELKYFGR.

Over 1 to 90 (MPQTHEMSLN…DDSILNAASM (90 aa)) the chain is Cytoplasmic. Phosphoserine is present on Ser43. Thr46 carries the post-translational modification Phosphothreonine. Residues 91–111 (WFSANMVLPAYAIGALGPMVF) form a helical membrane-spanning segment. Over 112–118 (DLNFGQS) the chain is Extracellular. The helical transmembrane segment at 119-139 (VFVIIFFNLLGLVSVAFFSVF) threads the bilayer. Topologically, residues 140–161 (GAELGLRQMILSRYLVGNIAAR) are cytoplasmic. The helical transmembrane segment at 162–182 (IFSFINFIACIGWGIVNTVAS) threads the bilayer. Over 183–198 (SQVLNMVNPGHQCPLW) the chain is Extracellular. A helical membrane pass occupies residues 199-219 (AGCIVIIGATVIVTFFGYGVI). Residues 220–221 (HA) lie on the Cytoplasmic side of the membrane. A helical membrane pass occupies residues 222–242 (YEKWAWVPNFAVFLVIIARLA). The Extracellular portion of the chain corresponds to 243–260 (RSKKFVLGEWTSGPTTAG). A helical transmembrane segment spans residues 261–281 (NVLSFGSTVYGFAAGWTTYAA). The Cytoplasmic portion of the chain corresponds to 282-295 (DYTVYMPRKTNKYK). A helical membrane pass occupies residues 296–316 (IFFSLVVGLATPLYFTMILGA). Residues 317 to 340 (AVAMAAIGDPAWKTYYDENSIGGL) lie on the Extracellular side of the membrane. The helical transmembrane segment at 341-361 (TFAVLVPNSVHGFGQFCCVLL) threads the bilayer. Residues 362 to 393 (SLSTIANNVPNMYTIALSVQATWEPLAKVPRV) are Cytoplasmic-facing. A helical transmembrane segment spans residues 394-414 (IWTLLGNAAALGIAIPACYYF). Topologically, residues 415–416 (ST) are extracellular. A helical membrane pass occupies residues 417 to 437 (FMNYFMDSIGYYLAIYIAIAC). The Cytoplasmic segment spans residues 438–460 (SEHFIYRRSFSAYNVDDWDSWER). The helical transmembrane segment at 461–481 (LPIGIAGTAALIVGAFGVALG) threads the bilayer. Over 482–493 (MCQTYWVGEISR) the chain is Extracellular. Residues 494-514 (LIGDYGGDIGFELGLSWAFIV) form a helical membrane-spanning segment. Over 515–528 (YNIARPFELKYFGR) the chain is Cytoplasmic.

It belongs to the purine-cytosine permease (2.A.39) family.

Its subcellular location is the membrane. In terms of biological role, probable purine-cytosine permease. The chain is Purine-cytosine permease FCY21 (FCY21) from Saccharomyces cerevisiae (strain ATCC 204508 / S288c) (Baker's yeast).